The sequence spans 1069 residues: MLRMRTAGWARGWCLGCCLLLPLSLSLAAAKQLLRYRLAEEGPADVRIGNVASDLGIVTGSGEVTFSLESGSEYLKIDNLTGELSTSERRIDREKLPQCQMIFDENECFLDFEVSVIGPSQSWVDLFEGQVIVLDINDNTPTFPSPVLTLTVEENRPVGTLYLLPTATDRDFGRNGIERYELLQEPGGGGSGGESRRAGAADSAPYPGGGGNGASGGGSGGSKRRLDASEGGGGTNPGGRSSVFELQVADTPDGEKQPQLIVKGALDREQRDSYELTLRVRDGGDPPRSSQAILRVLITDVNDNSPRFEKSVYEADLAENSAPGTPILQLRAADLDVGVNGQIEYVFGAATESVRRLLRLDETSGWLSVLHRIDREEVNQLRFTVMARDRGQPPKTDKATVVLNIKDENDNVPSIEIRKIGRIPLKDGVANVAEDVLVDTPIALVQVSDRDQGENGVVTCTVVGDVPFQLKPASDTEGDQNKKKYFLHTSTPLDYEATREFNVVIVAVDSGSPSLSSNNSLIVKVGDTNDNPPMFGQSVVEVYFPENNIPGERVATVLATDADSGKNAEIAYSLDSSVMGIFAIDPDSGDILVNTVLDREQTDRYEFKVNAKDKGIPVLQGSTTVIVQVADKNDNDPKFMQDVFTFYVKENLQPNSPVGMVTVMDADKGRNAEMSLYIEENNNIFSIENDTGTIYSTMSFDREHQTTYTFRVKAVDGGDPPRSATATVSLFVMDENDNAPTVTLPKNISYTLLPPSSNVRTVVATVLATDSDDGINADLNYSIVGGNPFKLFEIDPTSGVVSLVGKLTQKHYGLHRLVVQVNDSGQPSQSTTTLVHVFVNESVSNATAIDSQIARSLHIPLTQDIAGDPSYEISKQRLSIVIGVVAGIMTVILIILIVVMARYCRSKNKNGYEAGKKDHEDFFTPQQHDKSKKPKKDKKNKKSKQPLYSSIVTVEASKPNGQRYDSVNEKLSDSPSMGRYRSVNGGPGSPDLARHYKSSSPLPTVQLHPQSPTAGKKHQAVQDLPPANTFVGAGDNISIGSDHCSEYSCQTNNKYSKQMRLHPYITVFG.

An N-terminal signal peptide occupies residues 1-28; that stretch reads MLRMRTAGWARGWCLGCCLLLPLSLSLA. Cadherin domains are found at residues 29 to 143, 144 to 308, 309 to 415, 424 to 535, 536 to 639, 640 to 742, and 745 to 862; these read AAKQ…TPTF, PSPV…SPRF, EKSV…VPSI, PLKD…PPMF, GQSV…DPKF, MQDV…APTV, and PKNI…IPLT. Residues 29–879 lie on the Extracellular side of the membrane; the sequence is AAKQLLRYRL…SYEISKQRLS (851 aa). An N-linked (GlcNAc...) asparagine glycan is attached at N79. Residues 182–242 form a disordered region; it reads LLQEPGGGGS…GGTNPGGRSS (61 aa). Residues 207-221 show a composition bias toward gly residues; sequence PGGGGNGASGGGSGG. N-linked (GlcNAc...) asparagine glycans are attached at residues N689, N747, N780, N822, N840, and N845. A helical membrane pass occupies residues 880–900; that stretch reads IVIGVVAGIMTVILIILIVVM. Topologically, residues 901 to 1069 are cytoplasmic; that stretch reads ARYCRSKNKN…RLHPYITVFG (169 aa). Residues 910–988 are disordered; it reads NGYEAGKKDH…RYRSVNGGPG (79 aa). Positions 930 to 944 are enriched in basic residues; sequence KSKKPKKDKKNKKSK. A phosphoserine mark is found at S989 and S1011.

Expressed predominantly in brain and heart and at lower levels in various other tissues.

The protein resides in the cell membrane. This is Protocadherin-7 (PCDH7) from Homo sapiens (Human).